The sequence spans 295 residues: Probable deoxyhypusine synthase (295 aa).

Lysine 267 serves as the catalytic Nucleophile.

It belongs to the deoxyhypusine synthase family. NAD(+) is required as a cofactor.

It carries out the reaction [eIF5A protein]-L-lysine + spermidine = [eIF5A protein]-deoxyhypusine + propane-1,3-diamine. It functions in the pathway protein modification; eIF5A hypusination. In terms of biological role, catalyzes the NAD-dependent oxidative cleavage of spermidine and the subsequent transfer of the butylamine moiety of spermidine to the epsilon-amino group of a specific lysine residue of the eIF-5A precursor protein to form the intermediate deoxyhypusine residue. The chain is Probable deoxyhypusine synthase from Pyrobaculum calidifontis (strain DSM 21063 / JCM 11548 / VA1).